Reading from the N-terminus, the 307-residue chain is Probable thioesterase KK1J (307 aa).

This sequence belongs to the AMT4 thioesterase family.

It participates in secondary metabolite biosynthesis. Its function is as follows. Probable thioesterase; part of the gene cluster that mediates the biosynthesis of KK-1, a novel cyclic depsipeptide with 10 residues which is a promising active compound with high activity against many plant pathogens, especially Botrytis cinerea. Within the pathway, kk1J is not essential for the biosynthesis of KK-1, but plays a role for efficient production via correction of peptide chain synthesis by kk1B. The nonribosomal peptide synthetase (NRPS) kk1B catalyzes the elongation and cyclization of the decapeptide chain composed of 1 D-lactic acid residue (D-Lac), 1 pipecolic acid residue (Pip), 1 aspartic acid residue (Asp), 1 isoleucine residue (Ile), 1 glycine residue (Gly), 1 tyrosine residue (Tyr) and 4 valine residues (Val). The Asp, Ile and 3 Val residues are N-methylated by the 5 methyltransferase domains from the NRPS (found in modules 3, 5, 6, 7 and 9), whereas the Tyr residue is O-methylated by the cluster encoded O-methyltransferase kk1A. The thioesterase kk1J is likely to be involved in the corrective mechanism of peptide chain synthesis. The D-lactate dehydrogenase kk1H is involved in the synthesis of D-lactic acid from pyruvic acid, which is recognized by the A domain of the first kk1B module. The pyrroline-5-carboxylate reductase kk1I is involved in the synthesis of the L-pipecolic acid residue of KK-1 from delta-1-pyrroline-5-carboxylate (P5C), a metabolic intermediate of lysine. It still is unclear how kk1C and kk1D are involved in the production of KK-1. This Curvularia clavata protein is Probable thioesterase KK1J.